Here is a 106-residue protein sequence, read N- to C-terminus: Trp operon repressor homolog (106 aa).

The DNA-binding element occupies 59 to 82 (QREIQQILNTSAATITRGSNMIKI).

Belongs to the TrpR family. In terms of assembly, homodimer.

The protein localises to the cytoplasm. This protein is an aporepressor. When complexed with L-tryptophan it binds the operator region of the trp operon and prevents the initiation of transcription. In Histophilus somni (strain 2336) (Haemophilus somnus), this protein is Trp operon repressor homolog.